The primary structure comprises 91 residues: Putative defensin-like protein 221 (91 aa).

A signal peptide spans 1–19; it reads MKTLFFFLTIAVLVSSCTS. 3 disulfide bridges follow: Cys-61–Cys-78, Cys-64–Cys-83, and Cys-68–Cys-85.

The protein belongs to the DEFL family.

It is found in the secreted. The polypeptide is Putative defensin-like protein 221 (Arabidopsis thaliana (Mouse-ear cress)).